We begin with the raw amino-acid sequence, 130 residues long: Small ribosomal subunit protein uS11 (130 aa).

The protein belongs to the universal ribosomal protein uS11 family. Part of the 30S ribosomal subunit. Interacts with proteins S7 and S18. Binds to IF-3.

Functionally, located on the platform of the 30S subunit, it bridges several disparate RNA helices of the 16S rRNA. Forms part of the Shine-Dalgarno cleft in the 70S ribosome. This is Small ribosomal subunit protein uS11 from Xylella fastidiosa (strain M23).